Here is an 82-residue protein sequence, read N- to C-terminus: Penaeidin-3e (82 aa).

An N-terminal signal peptide occupies residues 1–19 (MRLVVCLVFLAPFALVCHG). A Pyrrolidone carboxylic acid modification is found at Gln-20. 3 disulfide bridges follow: Cys-51–Cys-66, Cys-55–Cys-73, and Cys-67–Cys-74. Ser-81 bears the Serine amide mark.

It belongs to the penaeidin family.

The protein resides in the cytoplasmic granule. Its function is as follows. Antibacterial and antifungal activity. Presents chitin-binding activity. The protein is Penaeidin-3e of Penaeus vannamei (Whiteleg shrimp).